We begin with the raw amino-acid sequence, 368 residues long: Protein pxr1 (368 aa).

Disordered stretches follow at residues 1–28 and 161–339; these read MGLA…TDSF and KEKA…PMGI. Residues 15 to 27 are compositionally biased toward polar residues; the sequence is DPNNTRWSGNTDS. The 55-residue stretch at 25–79 folds into the G-patch domain; it reads TDSFGHRMMKSQGWTPGEYLGAKDAAHAEFHTEANASHIRVVIKDNTLGLGAKIG. Acidic residues predominate over residues 168 to 182; it reads SSEESDSSSDEEEEK. 4 stretches are compositionally biased toward basic residues: residues 209 to 226, 242 to 254, 271 to 283, and 301 to 312; these read SKKS…KSKK, KSKK…KSKS, KARK…KKRK, and SSKKSKKDKHKS. The span at 313 to 324 shows a compositional bias: low complexity; that stretch reads PSTSKTSTKEST. Over residues 325–334 the composition is skewed to polar residues; it reads PIVSESSGRS.

This sequence belongs to the PINX1 family.

Its subcellular location is the nucleus. The protein resides in the nucleolus. In terms of biological role, involved in rRNA-processing at A0, A1 and A2 sites and negatively regulates telomerase. The sequence is that of Protein pxr1 (pxr1) from Botryotinia fuckeliana (strain B05.10) (Noble rot fungus).